Reading from the N-terminus, the 64-residue chain is Large ribosomal subunit protein uL30 (64 aa).

It belongs to the universal ribosomal protein uL30 family. In terms of assembly, part of the 50S ribosomal subunit.

The polypeptide is Large ribosomal subunit protein uL30 (Syntrophus aciditrophicus (strain SB)).